We begin with the raw amino-acid sequence, 209 residues long: MKTSEWIDISQPLNNDIATWPGDTPFSYEVSWPKEESGSVNVGKLTMSIHTGTHIDAPFHFDNEGKKVIDLDIQVYVGPVRIIDVSNLESIGKKELENFNLEGVERLLLRTSSHGKVNEFPDVIPHLHADIAPFLSEKGIRLIGVDVPSVDPLDDKELEAHHQLFKHGIHILENVVLDHVADGDYELIALPLALTDADGSPVRAVIRPI.

W20 contacts substrate. 3 residues coordinate Zn(2+): H50, H54, and D56. H60 serves as the catalytic Proton donor/acceptor. Positions 161 and 173 each coordinate Zn(2+).

This sequence belongs to the Cyclase 1 superfamily. KynB family. Homodimer. It depends on Zn(2+) as a cofactor.

The catalysed reaction is N-formyl-L-kynurenine + H2O = L-kynurenine + formate + H(+). It participates in amino-acid degradation; L-tryptophan degradation via kynurenine pathway; L-kynurenine from L-tryptophan: step 2/2. Its function is as follows. Catalyzes the hydrolysis of N-formyl-L-kynurenine to L-kynurenine, the second step in the kynurenine pathway of tryptophan degradation. This is Kynurenine formamidase from Bacillus cereus (strain ATCC 10987 / NRS 248).